Consider the following 116-residue polypeptide: Non-specific lipid-transfer protein 10 (116 aa).

Residues 1 to 22 form the signal peptide; that stretch reads MMRVVLPLCLLLASIFAWGSEA. 4 disulfide bridges follow: Cys-26-Cys-73, Cys-36-Cys-50, Cys-51-Cys-98, and Cys-71-Cys-112.

This sequence belongs to the plant LTP family.

Its function is as follows. Plant non-specific lipid-transfer proteins transfer phospholipids as well as galactolipids across membranes. May play a role in wax or cutin deposition in the cell walls of expanding epidermal cells and certain secretory tissues. The protein is Non-specific lipid-transfer protein 10 (LTP10) of Arabidopsis thaliana (Mouse-ear cress).